The sequence spans 174 residues: Gamma-crystallin C (174 aa).

2 Beta/gamma crystallin 'Greek key' domains span residues 2-40 (GKIT…RVDS) and 41-83 (GCWM…CLIS). An S-methylcysteine modification is found at Cys-23. Positions 84 to 87 (DTSS) are connecting peptide. Beta/gamma crystallin 'Greek key' domains lie at 88 to 128 (HRLR…HVLE) and 129 to 171 (GCWV…RRVV).

Belongs to the beta/gamma-crystallin family.

In terms of biological role, crystallins are the dominant structural components of the vertebrate eye lens. In Bos taurus (Bovine), this protein is Gamma-crystallin C (CRYGC).